The chain runs to 286 residues: Bifunctional protein FolD 2 (286 aa).

NADP(+) is bound by residues 165-167 (GRG), threonine 192, and isoleucine 233.

The protein belongs to the tetrahydrofolate dehydrogenase/cyclohydrolase family. In terms of assembly, homodimer.

It carries out the reaction (6R)-5,10-methylene-5,6,7,8-tetrahydrofolate + NADP(+) = (6R)-5,10-methenyltetrahydrofolate + NADPH. It catalyses the reaction (6R)-5,10-methenyltetrahydrofolate + H2O = (6R)-10-formyltetrahydrofolate + H(+). The protein operates within one-carbon metabolism; tetrahydrofolate interconversion. Functionally, catalyzes the oxidation of 5,10-methylenetetrahydrofolate to 5,10-methenyltetrahydrofolate and then the hydrolysis of 5,10-methenyltetrahydrofolate to 10-formyltetrahydrofolate. This chain is Bifunctional protein FolD 2, found in Salinispora arenicola (strain CNS-205).